The following is a 480-amino-acid chain: Glutamyl-tRNA(Gln) amidotransferase subunit A (480 aa).

Residues K74 and S149 each act as charge relay system in the active site. S173 acts as the Acyl-ester intermediate in catalysis.

The protein belongs to the amidase family. GatA subfamily. In terms of assembly, heterotrimer of A, B and C subunits.

It catalyses the reaction L-glutamyl-tRNA(Gln) + L-glutamine + ATP + H2O = L-glutaminyl-tRNA(Gln) + L-glutamate + ADP + phosphate + H(+). Its function is as follows. Allows the formation of correctly charged Gln-tRNA(Gln) through the transamidation of misacylated Glu-tRNA(Gln) in organisms which lack glutaminyl-tRNA synthetase. The reaction takes place in the presence of glutamine and ATP through an activated gamma-phospho-Glu-tRNA(Gln). This Vesicomyosocius okutanii subsp. Calyptogena okutanii (strain HA) protein is Glutamyl-tRNA(Gln) amidotransferase subunit A.